Here is a 307-residue protein sequence, read N- to C-terminus: Ornithine carbamoyltransferase (307 aa).

Carbamoyl phosphate-binding positions include 50–53 (STRT), Gln77, Arg101, and 128–131 (HPCQ). Residues Asn160, Asp224, and 228 to 229 (SM) each bind L-ornithine. Carbamoyl phosphate contacts are provided by residues 264 to 265 (CL) and Arg292.

The protein belongs to the aspartate/ornithine carbamoyltransferase superfamily. OTCase family.

It is found in the cytoplasm. The enzyme catalyses carbamoyl phosphate + L-ornithine = L-citrulline + phosphate + H(+). It participates in amino-acid biosynthesis; L-arginine biosynthesis; L-arginine from L-ornithine and carbamoyl phosphate: step 1/3. Inhibited by arginine, norvaline. Reversibly catalyzes the transfer of the carbamoyl group from carbamoyl phosphate (CP) to the N(epsilon) atom of ornithine (ORN) to produce L-citrulline, which is a substrate for argininosuccinate synthetase, the enzyme involved in the final step in arginine biosynthesis. This Mycolicibacterium smegmatis (strain ATCC 700084 / mc(2)155) (Mycobacterium smegmatis) protein is Ornithine carbamoyltransferase.